Reading from the N-terminus, the 293-residue chain is MPAKILDGKALAARLQAEMAAQVQAWIPQVGRPPGLAVLRVGEDPASAAYVRGKERACERLGIASFGRHFSAQDSPAHLLDTIDQLNQDERVDGILVQLPLPPGWDPIPPLLAINPDKDVDGLHPLNLGRLLRGEPGLRSCTPLGVMRLLQAEGIPIAGRKAVVVGRSILVGKPLSLMLLAADATVTLAHSRTPDLAEVTRAADIVVMAVGRPRLLRADMVKPGAVVIDVGINRIETPTGAEQLVGDVDYEAVKELAAAITPVPGGVGPMTVTMLLANTLQSYKLRSHLCSHY.

Residues 166 to 168 (GRS), S191, and I232 each bind NADP(+).

This sequence belongs to the tetrahydrofolate dehydrogenase/cyclohydrolase family. As to quaternary structure, homodimer.

It catalyses the reaction (6R)-5,10-methylene-5,6,7,8-tetrahydrofolate + NADP(+) = (6R)-5,10-methenyltetrahydrofolate + NADPH. It carries out the reaction (6R)-5,10-methenyltetrahydrofolate + H2O = (6R)-10-formyltetrahydrofolate + H(+). It functions in the pathway one-carbon metabolism; tetrahydrofolate interconversion. Functionally, catalyzes the oxidation of 5,10-methylenetetrahydrofolate to 5,10-methenyltetrahydrofolate and then the hydrolysis of 5,10-methenyltetrahydrofolate to 10-formyltetrahydrofolate. The chain is Bifunctional protein FolD from Synechococcus sp. (strain JA-2-3B'a(2-13)) (Cyanobacteria bacterium Yellowstone B-Prime).